The chain runs to 481 residues: FAD-linked oxidoreductase afoF (481 aa).

Residues M1–A16 form the signal peptide. One can recognise an FAD-binding PCMH-type domain in the interval S52–Q227. A glycan (N-linked (GlcNAc...) asparagine) is linked at N82. Position 92 is a pros-8alpha-FAD histidine (H92). N-linked (GlcNAc...) asparagine glycosylation is found at N196, N241, N276, N309, N312, and N376.

This sequence belongs to the oxygen-dependent FAD-linked oxidoreductase family. FAD is required as a cofactor.

Its function is as follows. FAD-linked oxidoreductase; part of the gene cluster that mediates the biosynthesis of asperfuranone, a probable antitumor agent. The polyketide synthase afoG is responsible for producing the 3,5-dimethyloctadienone moiety from acetyl-CoA, three malonyl-CoA, and two S-adenosyl methionines (SAM). The 3,5-dimethyloctadienone moiety is then loaded onto the SAT domain of afoE and extended with four malonyl-CoA and one SAM, which leads to the formation of 2,4-dihydroxy-6-(5,7-dimethyl-2-oxo-trans-3-trans-5-nonadienyl)-3-methylbenzaldehyde (compound 2) after reductive release and aldol condensation. AfoD is the next enzyme in the biosynthesis sequence and hydroxylates the side chain at the benzylic position of compound 2. After benzylic hydroxylation, a furan ring is formed after five-member ring hemiacetal formation and water elimination. AfoF and afoC are proposed to oxidize the R-diketone proton and to reduce the unconjugated carbonyl group, respectively, to generate asperfuranone. Since no intermediates could be isolated from afoF and afoC deletants, the sequence of these two enzymes is not fully understood. Moreover, since afoC deletant still produces a small amount of asperfuranone, other endogenous oxidoreductases might catalyze the same reaction with much less efficiency. This Emericella nidulans (strain FGSC A4 / ATCC 38163 / CBS 112.46 / NRRL 194 / M139) (Aspergillus nidulans) protein is FAD-linked oxidoreductase afoF.